We begin with the raw amino-acid sequence, 624 residues long: MLSRVARCSRTLNQVTRNGQSGLFSAVLRTSIRQNSTDSPASNNANEIYTKLSDTKDPQRNQFFQYTWGSWLTNDKSKKKQRETTFSIEGLTLFIDRINQLESKLAQPKSLEGAFVLANNKELLGSTKDKVIVRSIASIHEGKHHRVYKITLNTGKELVLRIPYKLDSDVAIASKLKSEVATTDFLKLKLGLNVPRVLAYGVDSNNEIKSPFILQEFISGELLMKKWHPLLPDSEETNKRLHEVIDPIAQFQNKILSVTFNKFGSLYFHDDVEGSLQNDVPYEGETDSALSNRWRIGPSVERQFTRNKNKLQQSIIDQYNGPWDASNPTAVLESVADIELENAKSKLSLINADAGANENDRALITKQIKTFENLKKISPQLINDKSKSIMNVEELFKPRLYIPDLDPLNVIQHSETENYFIDFEGSTIKPFILTSYPKFVAYQGAKIYNLEEDVPGYKEMEELEKQQYEFMYYKTRNERMWEFELNKYRHDLIAIASPHIKVLKSPYLQALDVKNGKDYLYVEGSIVQLQAMWEAYVANELVNSKDTKFPIEYTAEYLDQHQQELSDYQLETVSSPFSATGGWIPQDMFDTLKAQGILVETKDGNYKVETEKVLENPPAQPEEK.

Residues 1–34 (MLSRVARCSRTLNQVTRNGQSGLFSAVLRTSIRQ) constitute a mitochondrion transit peptide.

This sequence belongs to the AIM9 family.

The protein resides in the mitochondrion. The protein is Altered inheritance of mitochondria protein 9, mitochondrial (AIM9) of Candida albicans (strain SC5314 / ATCC MYA-2876) (Yeast).